Reading from the N-terminus, the 624-residue chain is (-)-beta-phellandrene synthase 3, chloroplastic (624 aa).

The N-terminal 48 residues, 1-48, are a transit peptide targeting the chloroplast; it reads MAIVSSVPLASKSCLHKSLISSIHKLKPFCRTIPTLGMSRPGKYVMPS. Mg(2+) contacts are provided by Asp375, Asp379, and Asp527. The DDXXD motif signature appears at 375–379; it reads DDMYD.

Belongs to the terpene synthase family. Tpsd subfamily. Mg(2+) is required as a cofactor. Mn(2+) serves as cofactor.

The protein localises to the plastid. Its subcellular location is the chloroplast. It carries out the reaction (2E)-geranyl diphosphate = (-)-beta-phellandrene + diphosphate. It participates in terpene metabolism; oleoresin biosynthesis. Functionally, terpene synthase (TPS) involved in the biosynthesis of monoterpene natural products included in conifer oleoresin secretions and volatile emissions; these compounds contribute to biotic and abiotic stress defense against herbivores and pathogens. Catalyzes the conversion of (2E)-geranyl diphosphate (GPP) to (-)-beta-phellandrene. This Picea sitchensis (Sitka spruce) protein is (-)-beta-phellandrene synthase 3, chloroplastic.